We begin with the raw amino-acid sequence, 384 residues long: Lipid-A-disaccharide synthase (384 aa).

The protein belongs to the LpxB family.

It catalyses the reaction a lipid X + a UDP-2-N,3-O-bis[(3R)-3-hydroxyacyl]-alpha-D-glucosamine = a lipid A disaccharide + UDP + H(+). It participates in bacterial outer membrane biogenesis; LPS lipid A biosynthesis. Functionally, condensation of UDP-2,3-diacylglucosamine and 2,3-diacylglucosamine-1-phosphate to form lipid A disaccharide, a precursor of lipid A, a phosphorylated glycolipid that anchors the lipopolysaccharide to the outer membrane of the cell. In Geobacter metallireducens (strain ATCC 53774 / DSM 7210 / GS-15), this protein is Lipid-A-disaccharide synthase.